A 361-amino-acid chain; its full sequence is tRNA/tmRNA (uracil-C(5))-methyltransferase (361 aa).

The S-adenosyl-L-methionine site is built by glutamine 185, tyrosine 213, asparagine 218, glutamate 234, and aspartate 294. Residue cysteine 319 is the Nucleophile of the active site. The Proton acceptor role is filled by glutamate 353.

Belongs to the class I-like SAM-binding methyltransferase superfamily. RNA M5U methyltransferase family. TrmA subfamily.

It carries out the reaction uridine(54) in tRNA + S-adenosyl-L-methionine = 5-methyluridine(54) in tRNA + S-adenosyl-L-homocysteine + H(+). The catalysed reaction is uridine(341) in tmRNA + S-adenosyl-L-methionine = 5-methyluridine(341) in tmRNA + S-adenosyl-L-homocysteine + H(+). Dual-specificity methyltransferase that catalyzes the formation of 5-methyluridine at position 54 (m5U54) in all tRNAs, and that of position 341 (m5U341) in tmRNA (transfer-mRNA). This is tRNA/tmRNA (uracil-C(5))-methyltransferase from Pseudomonas putida (strain W619).